The sequence spans 282 residues: 2-dehydro-3-deoxyphosphooctonate aldolase (282 aa).

It belongs to the KdsA family.

The protein resides in the cytoplasm. The catalysed reaction is D-arabinose 5-phosphate + phosphoenolpyruvate + H2O = 3-deoxy-alpha-D-manno-2-octulosonate-8-phosphate + phosphate. It functions in the pathway carbohydrate biosynthesis; 3-deoxy-D-manno-octulosonate biosynthesis; 3-deoxy-D-manno-octulosonate from D-ribulose 5-phosphate: step 2/3. It participates in bacterial outer membrane biogenesis; lipopolysaccharide biosynthesis. The chain is 2-dehydro-3-deoxyphosphooctonate aldolase from Granulibacter bethesdensis (strain ATCC BAA-1260 / CGDNIH1).